The sequence spans 66 residues: Alpha-actitoxin-Ms11a-2 (66 aa).

An N-terminal signal peptide occupies residues 1-24; the sequence is MASKIFFVLAVFLVMSAVLPESFA. Intrachain disulfides connect Cys26/Cys41, Cys33/Cys46, and Cys40/Cys61.

Its subcellular location is the secreted. It localises to the nematocyst. Its function is as follows. Alpha-toxins act on postsynaptic membranes, they bind to the nicotinic acetylcholine receptors (nAChR) and thus inhibit them. This toxin competes with alpha-bungarotoxin for binding to orthosteric sites on muscle-type T.carlifornicus (IC(50)=1080 nM) and human alpha-7/CHRNA7 nAChRs (IC(50)=14.13 uM). This Metridium senile (Brown sea anemone) protein is Alpha-actitoxin-Ms11a-2.